The chain runs to 250 residues: Ditrans,polycis-undecaprenyl-diphosphate synthase ((2E,6E)-farnesyl-diphosphate specific) (250 aa).

The active site involves Asp-27. Asp-27 serves as a coordination point for Mg(2+). Residues Gly-28 to Arg-31, Trp-32, Arg-40, His-44, and Ser-72 to Glu-74 each bind substrate. The Proton acceptor role is filled by Asn-75. Substrate is bound by residues Trp-76, Arg-78, and Arg-195. His-200 lines the Mg(2+) pocket. Arg-201–Ser-203 serves as a coordination point for substrate. Glu-214 contacts Mg(2+).

This sequence belongs to the UPP synthase family. As to quaternary structure, homodimer. Requires Mg(2+) as cofactor.

The enzyme catalyses 8 isopentenyl diphosphate + (2E,6E)-farnesyl diphosphate = di-trans,octa-cis-undecaprenyl diphosphate + 8 diphosphate. Functionally, catalyzes the sequential condensation of isopentenyl diphosphate (IPP) with (2E,6E)-farnesyl diphosphate (E,E-FPP) to yield (2Z,6Z,10Z,14Z,18Z,22Z,26Z,30Z,34E,38E)-undecaprenyl diphosphate (di-trans,octa-cis-UPP). UPP is the precursor of glycosyl carrier lipid in the biosynthesis of bacterial cell wall polysaccharide components such as peptidoglycan and lipopolysaccharide. The polypeptide is Ditrans,polycis-undecaprenyl-diphosphate synthase ((2E,6E)-farnesyl-diphosphate specific) (Blochmanniella floridana).